A 514-amino-acid polypeptide reads, in one-letter code: Efflux pump aflT (514 aa).

Helical transmembrane passes span 13–33, 61–81, 85–105, 116–136, 146–166, 174–194, 218–238, 247–267, 289–309, and 321–341; these read ISGMKLYLIVLSLLLAVFCVA, SAYLLTTCAFQLLYGKLYALF, WVFLVALCIFEVGSLICGVAP, IAGVGSSGIFTGALVTIAHIV, GLLGGMYGIASVAGPLLGGAF, WCFYINLPVGGVTAVVILFLL, GTIVFTPSIICVLLALQWGGV, IIALFVLFGVLLITFIIIQVL, VFVFFIGASMFVMIYYVPIWF, and GIDSIALILANTAGAIISGAV. N-linked (GlcNAc...) asparagine glycosylation occurs at asparagine 343. A run of 4 helical transmembrane segments spans residues 351–371, 378–398, 411–431, and 485–505; these read WFIVSSVIMSIGAGCLTLFTV, WIGFLFLYGIGVGFGFQQGAV, IGTALIWFVQMLGGALFTSVA, and LDVFQVALICSCLSILGAVGI.

This sequence belongs to the major facilitator superfamily. TCR/Tet family.

The protein resides in the cell membrane. Efflux pump; part of the gene cluster that mediates the biosynthesis of aflatoxins. This Aspergillus parasiticus (strain ATCC 56775 / NRRL 5862 / SRRC 143 / SU-1) protein is Efflux pump aflT.